A 120-amino-acid chain; its full sequence is UPF0102 protein HSM_1206 (120 aa).

The protein belongs to the UPF0102 family.

This is UPF0102 protein HSM_1206 from Histophilus somni (strain 2336) (Haemophilus somnus).